The chain runs to 664 residues: Transketolase 1 (664 aa).

Histidine 26 serves as a coordination point for substrate. Thiamine diphosphate contacts are provided by residues histidine 66 and 114-116; that span reads GPL. Aspartate 155 serves as a coordination point for Mg(2+). Residues glycine 156 and asparagine 185 each coordinate thiamine diphosphate. Residues asparagine 185 and isoleucine 187 each contribute to the Mg(2+) site. Residues histidine 260, arginine 357, and serine 384 each contribute to the substrate site. Histidine 260 contacts thiamine diphosphate. The Proton donor role is filled by glutamate 411. Phenylalanine 437 lines the thiamine diphosphate pocket. Residues histidine 461, aspartate 469, and arginine 520 each coordinate substrate.

Belongs to the transketolase family. Homodimer. Requires Mg(2+) as cofactor. Ca(2+) serves as cofactor. The cofactor is Mn(2+). Co(2+) is required as a cofactor. It depends on thiamine diphosphate as a cofactor.

It carries out the reaction D-sedoheptulose 7-phosphate + D-glyceraldehyde 3-phosphate = aldehydo-D-ribose 5-phosphate + D-xylulose 5-phosphate. Functionally, catalyzes the transfer of a two-carbon ketol group from a ketose donor to an aldose acceptor, via a covalent intermediate with the cofactor thiamine pyrophosphate. This chain is Transketolase 1 (tkt1), found in Vibrio vulnificus (strain CMCP6).